Reading from the N-terminus, the 87-residue chain is Large ribosomal subunit protein bL27 (87 aa).

This sequence belongs to the bacterial ribosomal protein bL27 family.

The polypeptide is Large ribosomal subunit protein bL27 (Stenotrophomonas maltophilia (strain R551-3)).